The chain runs to 506 residues: Probable cytosol aminopeptidase (506 aa).

Residues K270 and D275 each contribute to the Mn(2+) site. K282 is a catalytic residue. Positions 293, 352, and 354 each coordinate Mn(2+). The active site involves R356.

Belongs to the peptidase M17 family. The cofactor is Mn(2+).

The protein resides in the cytoplasm. It carries out the reaction Release of an N-terminal amino acid, Xaa-|-Yaa-, in which Xaa is preferably Leu, but may be other amino acids including Pro although not Arg or Lys, and Yaa may be Pro. Amino acid amides and methyl esters are also readily hydrolyzed, but rates on arylamides are exceedingly low.. The catalysed reaction is Release of an N-terminal amino acid, preferentially leucine, but not glutamic or aspartic acids.. Functionally, presumably involved in the processing and regular turnover of intracellular proteins. Catalyzes the removal of unsubstituted N-terminal amino acids from various peptides. This is Probable cytosol aminopeptidase from Photorhabdus laumondii subsp. laumondii (strain DSM 15139 / CIP 105565 / TT01) (Photorhabdus luminescens subsp. laumondii).